A 665-amino-acid polypeptide reads, in one-letter code: Pre-mRNA-processing factor 39 (665 aa).

The segment covering 1–11 has biased composition (basic and acidic residues); that stretch reads MQNSHMEEYRN. The tract at residues 1 to 28 is disordered; that stretch reads MQNSHMEEYRNSDNGSTGNSSEVAVVEH. Over residues 12 to 22 the composition is skewed to polar residues; sequence SDNGSTGNSSE. Residue S44 is modified to Phosphoserine. HAT repeat units lie at residues 107 to 139, 141 to 173, 181 to 216, 218 to 251, 331 to 363, 365 to 397, and 402 to 434; these read NHLM…LEKR, DNIK…FLKE, ETNT…WENE, GNLR…HVQN, FEEG…FEIE, GTHE…YMEN, and GVRH…QQGN. Basic and acidic residues predominate over residues 599-622; the sequence is QDTLKRKAENGSEEPEEKKAHTED. The interval 599–625 is disordered; it reads QDTLKRKAENGSEEPEEKKAHTEDLSS.

It belongs to the PRP39 family.

Its subcellular location is the nucleus. Involved in pre-mRNA splicing. This Mus musculus (Mouse) protein is Pre-mRNA-processing factor 39 (Prpf39).